The sequence spans 76 residues: Putative membrane protein insertion efficiency factor (76 aa).

The protein belongs to the UPF0161 family.

It is found in the cell inner membrane. In terms of biological role, could be involved in insertion of integral membrane proteins into the membrane. In Porphyromonas gingivalis (strain ATCC 33277 / DSM 20709 / CIP 103683 / JCM 12257 / NCTC 11834 / 2561), this protein is Putative membrane protein insertion efficiency factor.